The chain runs to 350 residues: Adenine deaminase (350 aa).

Residues histidine 24, histidine 26, and histidine 207 each contribute to the Zn(2+) site. The active-site Proton donor is glutamate 210. Aspartate 288 serves as a coordination point for Zn(2+). Aspartate 289 lines the substrate pocket.

Belongs to the metallo-dependent hydrolases superfamily. Adenosine and AMP deaminases family. Adenine deaminase type 2 subfamily. Requires Zn(2+) as cofactor.

The enzyme catalyses adenine + H2O + H(+) = hypoxanthine + NH4(+). Its function is as follows. Catalyzes the hydrolytic deamination of adenine to hypoxanthine. Plays an important role in the purine salvage pathway and in nitrogen catabolism. The sequence is that of Adenine deaminase from Paraburkholderia phytofirmans (strain DSM 17436 / LMG 22146 / PsJN) (Burkholderia phytofirmans).